A 200-amino-acid polypeptide reads, in one-letter code: Cytochrome c biogenesis ATP-binding export protein CcmA (200 aa).

An ABC transporter domain is found at 1–200 (MRLSGNGLRC…ARELRIGGAA (200 aa)). ATP is bound at residue 35 to 42 (GPNGAGKT).

Belongs to the ABC transporter superfamily. CcmA exporter (TC 3.A.1.107) family. As to quaternary structure, the complex is composed of two ATP-binding proteins (CcmA) and two transmembrane proteins (CcmB).

The protein resides in the cell inner membrane. It catalyses the reaction heme b(in) + ATP + H2O = heme b(out) + ADP + phosphate + H(+). Its function is as follows. Part of the ABC transporter complex CcmAB involved in the biogenesis of c-type cytochromes; once thought to export heme, this seems not to be the case, but its exact role is uncertain. Responsible for energy coupling to the transport system. The sequence is that of Cytochrome c biogenesis ATP-binding export protein CcmA from Nitrobacter winogradskyi (strain ATCC 25391 / DSM 10237 / CIP 104748 / NCIMB 11846 / Nb-255).